The chain runs to 89 residues: Small ribosomal subunit protein uS15 (89 aa).

Belongs to the universal ribosomal protein uS15 family. As to quaternary structure, part of the 30S ribosomal subunit. Forms a bridge to the 50S subunit in the 70S ribosome, contacting the 23S rRNA.

Its function is as follows. One of the primary rRNA binding proteins, it binds directly to 16S rRNA where it helps nucleate assembly of the platform of the 30S subunit by binding and bridging several RNA helices of the 16S rRNA. In terms of biological role, forms an intersubunit bridge (bridge B4) with the 23S rRNA of the 50S subunit in the ribosome. The sequence is that of Small ribosomal subunit protein uS15 from Polynucleobacter necessarius subsp. necessarius (strain STIR1).